The primary structure comprises 715 residues: Targeting protein for Xklp2-B (715 aa).

A disordered region spans residues 36-167 (NAENIPPDQK…LTMPATPTVL (132 aa)). Residues 47–56 (LSETSVNAEQ) show a composition bias toward polar residues. The span at 85–103 (QTKRSARRMSKKHRQKILL) shows a compositional bias: basic residues. The segment covering 104 to 115 (KMKETHLEKETA) has biased composition (basic and acidic residues). Over residues 141–152 (QPTSSHHGTTSP) the composition is skewed to polar residues. Phosphoserine; by plk1 is present on Ser-204. Disordered stretches follow at residues 260–291 (PPTS…EEAS) and 314–337 (RSRQ…TNPK).

The protein belongs to the TPX2 family. In terms of assembly, associates with microtubules. Interacts with aurka and plk1. Interacts with kif15. In terms of processing, phosphorylated during mitosis. Hyperphosphorylated upon assembly of microtubules.

The protein localises to the nucleus. The protein resides in the cytoplasm. It is found in the cytoskeleton. Its subcellular location is the spindle. It localises to the spindle pole. Functionally, spindle assembly factor. Required for normal assembly of mitotic spindles. Mediates the binding kif15 and aurka to spindle microtubules. Required for targeting kif15 to microtubule minus ends. Activates aurka by promoting its autophosphorylation and protects the phosphorylated residue against dephosphorylation. This chain is Targeting protein for Xklp2-B (tpx2-b), found in Xenopus laevis (African clawed frog).